The chain runs to 205 residues: Non-specific lipid transfer protein GPI-anchored 21 (205 aa).

The N-terminal stretch at 1 to 27 (MNSNSFLISAALIFSLLSSNSPTSILA) is a signal peptide. Cystine bridges form between cysteine 33/cysteine 75, cysteine 44/cysteine 59, cysteine 60/cysteine 100, and cysteine 73/cysteine 109. An N-linked (GlcNAc...) asparagine glycan is attached at asparagine 89. The interval 116-182 (LPTPGPASFG…FAPPPPSSSP (67 aa)) is disordered. Low complexity predominate over residues 126-156 (PTTSPTDSQTSDPEGSASFRPPTSPTTSQTP). Serine 179 carries the GPI-anchor amidated serine lipid modification. Positions 180–205 (SSPSSSHSLKLSYLLFAFAFTIIKFI) are cleaved as a propeptide — removed in mature form.

It belongs to the plant LTP family.

Its subcellular location is the cell membrane. Its function is as follows. Probable lipid transfer protein. This chain is Non-specific lipid transfer protein GPI-anchored 21, found in Arabidopsis thaliana (Mouse-ear cress).